Reading from the N-terminus, the 147-residue chain is Helix-loop-helix protein 13 (147 aa).

A bHLH domain is found at 41–93; sequence EERQTASIRERKRMCSINVAFIELRNYIPTFPYEKRLSKIDTLNLAIAYINML.

Expressed in hermaphrodite dopaminergic neurons (ADE, CEP, and PDE).

Its subcellular location is the nucleus. The protein resides in the cytoplasm. In terms of biological role, transcriptional activator. Shown to have a role in the negative regulation of exit from L1 arrest and dauer diapause dependent on IIS signaling (insulin and insulin-like growth factor (IGF) signaling). Hypodermal expression is regulated by IIS/daf-16 while neuronal expression is not under the control of IIS/daf-16. The chain is Helix-loop-helix protein 13 from Caenorhabditis elegans.